The following is a 318-amino-acid chain: NADH-ubiquinone oxidoreductase chain 1 (318 aa).

The next 8 helical transmembrane spans lie at 3-23 (TMNL…LTLV), 69-89 (ILYI…WTPL), 98-118 (FNLG…SILW), 135-155 (AVAQ…SILL), 171-191 (HLWL…STLA), 217-237 (AGPF…MNAL), 253-273 (ELFT…FLWI), and 294-314 (LPLT…ISSI).

The protein belongs to the complex I subunit 1 family. Core subunit of respiratory chain NADH dehydrogenase (Complex I) which is composed of 45 different subunits.

Its subcellular location is the mitochondrion inner membrane. The enzyme catalyses a ubiquinone + NADH + 5 H(+)(in) = a ubiquinol + NAD(+) + 4 H(+)(out). In terms of biological role, core subunit of the mitochondrial membrane respiratory chain NADH dehydrogenase (Complex I) which catalyzes electron transfer from NADH through the respiratory chain, using ubiquinone as an electron acceptor. Essential for the catalytic activity and assembly of complex I. This chain is NADH-ubiquinone oxidoreductase chain 1 (MT-ND1), found in Papio hamadryas (Hamadryas baboon).